Consider the following 586-residue polypeptide: Dual specificity tyrosine-phosphorylation-regulated kinase 3 (586 aa).

The segment covering 1–13 has biased composition (basic and acidic residues); it reads MGGAARDRGRKDA. A disordered region spans residues 1–187; sequence MGGAARDRGR…QGVIGGPNNG (187 aa). Residues 208-521 enclose the Protein kinase domain; the sequence is YEVLKIIGKG…PAQALRHPWI (314 aa). ATP-binding positions include 214 to 222, lysine 237, and 287 to 290; these read IGKGSFGQV and FELL. Aspartate 334 (proton acceptor) is an active-site residue. Tyrosine 368 is modified (phosphotyrosine). The Nuclear localization signal motif lies at 467-480; it reads RSRRGKKRGPPGSK.

Belongs to the protein kinase superfamily. CMGC Ser/Thr protein kinase family. MNB/DYRK subfamily. Interacts with SIRT1. Mg(2+) serves as cofactor. Post-translationally, ubiquitinated at anaphase by the anaphase-promoting complex (APC/C), leading to its degradation by the proteasome. Protein kinase activity is activated following autophosphorylation at Tyr-368.

The protein localises to the nucleus. It is found in the cytoplasm. Its subcellular location is the nucleus speckle. It localises to the cytoplasmic granule. The protein resides in the cytoskeleton. The protein localises to the microtubule organizing center. It is found in the centrosome. It carries out the reaction L-seryl-[protein] + ATP = O-phospho-L-seryl-[protein] + ADP + H(+). It catalyses the reaction L-threonyl-[protein] + ATP = O-phospho-L-threonyl-[protein] + ADP + H(+). The enzyme catalyses L-tyrosyl-[protein] + ATP = O-phospho-L-tyrosyl-[protein] + ADP + H(+). With respect to regulation, protein kinase activity is activated following autophosphorylation at Tyr-368. Its function is as follows. Dual-specificity protein kinase that promotes disassembly of several types of membraneless organelles during mitosis, such as stress granules, nuclear speckles and pericentriolar material. Dual-specificity tyrosine-regulated kinases (DYRKs) autophosphorylate a critical tyrosine residue in their activation loop and phosphorylate their substrate on serine and threonine residues. Acts as a central dissolvase of membraneless organelles during the G2-to-M transition, after the nuclear-envelope breakdown: acts by mediating phosphorylation of multiple serine and threonine residues in unstructured domains of proteins, such as SRRM1 and PCM1. Does not mediate disassembly of all membraneless organelles: disassembly of P-body and nucleolus is not regulated by DYRK3. Dissolution of membraneless organelles at the onset of mitosis is also required to release mitotic regulators, such as ZNF207, from liquid-unmixed organelles where they are sequestered and keep them dissolved during mitosis. Regulates mTORC1 by mediating the dissolution of stress granules: during stressful conditions, DYRK3 partitions from the cytosol to the stress granule, together with mTORC1 components, which prevents mTORC1 signaling. When stress signals are gone, the kinase activity of DYRK3 is required for the dissolution of stress granule and mTORC1 relocation to the cytosol: acts by mediating the phosphorylation of the mTORC1 inhibitor AKT1S1, allowing full reactivation of mTORC1 signaling. Also acts as a negative regulator of EPO-dependent erythropoiesis: may place an upper limit on red cell production during stress erythropoiesis. Inhibits cell death due to cytokine withdrawal in hematopoietic progenitor cells. Promotes cell survival upon genotoxic stress through phosphorylation of SIRT1: this in turn inhibits p53/TP53 activity and apoptosis. The polypeptide is Dual specificity tyrosine-phosphorylation-regulated kinase 3 (Mus musculus (Mouse)).